The chain runs to 345 residues: Adenosine kinase 2 (345 aa).

D300 is an active-site residue.

This sequence belongs to the carbohydrate kinase PfkB family. In terms of assembly, interacts with the begomovirus AL2 protein and the curtovirus L2 protein. Interacts with KIN11. Requires Mg(2+) as cofactor. In terms of processing, phosphorylated by KIN11. As to expression, widely expressed.

The protein resides in the cytoplasm. It carries out the reaction adenosine + ATP = AMP + ADP + H(+). It participates in purine metabolism; AMP biosynthesis via salvage pathway; AMP from adenosine: step 1/1. Inactivated by the begomovirus AL2 protein or the curtovirus L2 protein. In terms of biological role, ATP dependent phosphorylation of adenosine and other related nucleoside analogs to monophosphate derivatives. Essential to sustain methyl recycling. The sequence is that of Adenosine kinase 2 from Arabidopsis thaliana (Mouse-ear cress).